The chain runs to 293 residues: Proline iminopeptidase (293 aa).

Positions 28 to 277 constitute an AB hydrolase-1 domain; sequence PLVLLHGGPG…NCGHMSFVEK (250 aa). Ser105 (nucleophile) is an active-site residue. Residue Asp244 is part of the active site. The Proton donor role is filled by His271.

Belongs to the peptidase S33 family.

The protein localises to the cell envelope. The catalysed reaction is Release of N-terminal proline from a peptide.. In terms of biological role, releases the N-terminal proline from various substrates. In Lactobacillus crispatus (strain ST1), this protein is Proline iminopeptidase.